Here is a 310-residue protein sequence, read N- to C-terminus: Carbamate kinase-like protein YqeA (310 aa).

The protein belongs to the carbamate kinase family.

This chain is Carbamate kinase-like protein YqeA (yqeA), found in Escherichia coli (strain K12).